The following is a 180-amino-acid chain: Large ribosomal subunit protein uL5 (180 aa).

The protein belongs to the universal ribosomal protein uL5 family. Part of the 50S ribosomal subunit; part of the 5S rRNA/L5/L18/L25 subcomplex. Contacts the 5S rRNA and the P site tRNA. Forms a bridge to the 30S subunit in the 70S ribosome.

In terms of biological role, this is one of the proteins that bind and probably mediate the attachment of the 5S RNA into the large ribosomal subunit, where it forms part of the central protuberance. In the 70S ribosome it contacts protein S13 of the 30S subunit (bridge B1b), connecting the 2 subunits; this bridge is implicated in subunit movement. Contacts the P site tRNA; the 5S rRNA and some of its associated proteins might help stabilize positioning of ribosome-bound tRNAs. The polypeptide is Large ribosomal subunit protein uL5 (Synechococcus sp. (strain JA-2-3B'a(2-13)) (Cyanobacteria bacterium Yellowstone B-Prime)).